The chain runs to 165 residues: Cytochrome c-type biogenesis protein CcmE (165 aa).

The Cytoplasmic portion of the chain corresponds to 1–7 (MTRKQKR). The chain crosses the membrane as a helical; Signal-anchor for type II membrane protein span at residues 8–28 (LAIIGGGMSFIVAAVLLVMFA). Over 29–165 (FGQSIAYFYM…ASGDKTGATK (137 aa)) the chain is Periplasmic. Residues His-123 and Tyr-127 each contribute to the heme site. Residues 138–165 (DKGLWQQGAEGAAPAASAASGDKTGATK) form a disordered region. The span at 145 to 158 (GAEGAAPAASAASG) shows a compositional bias: low complexity.

It belongs to the CcmE/CycJ family.

Its subcellular location is the cell inner membrane. Functionally, heme chaperone required for the biogenesis of c-type cytochromes. Transiently binds heme delivered by CcmC and transfers the heme to apo-cytochromes in a process facilitated by CcmF and CcmH. The polypeptide is Cytochrome c-type biogenesis protein CcmE (Agrobacterium fabrum (strain C58 / ATCC 33970) (Agrobacterium tumefaciens (strain C58))).